The primary structure comprises 138 residues: Acidic phospholipase A2 Tpu-E6a (138 aa).

An N-terminal signal peptide occupies residues 1–16 (MRTLWIMAVLLLGVKG). Disulfide bonds link Cys42-Cys131, Cys44-Cys60, Cys59-Cys111, Cys65-Cys138, Cys66-Cys104, Cys73-Cys97, and Cys91-Cys102. Positions 43, 45, and 47 each coordinate Ca(2+). His63 is an active-site residue. Ca(2+) is bound at residue Asp64. Asp105 is a catalytic residue.

In terms of assembly, monomer. The cofactor is Ca(2+). As to expression, expressed by the venom gland.

The protein localises to the secreted. The catalysed reaction is a 1,2-diacyl-sn-glycero-3-phosphocholine + H2O = a 1-acyl-sn-glycero-3-phosphocholine + a fatty acid + H(+). Functionally, snake venom phospholipase A2 (PLA2) that impairs hemostasis. It weakly inhibits ADP-induced platelet aggregation when tested on platelet rich plasma from human and rabbit blood (15-25% of inhibition at 5-10 ug of enzyme), and dose-dependently inhibits blood coagulation, possibly by inhibiting thrombin activation. Exhibits high hydrolytic activities toward L-dipalmitoyl phosphatidylcholine. PLA2 catalyzes the calcium-dependent hydrolysis of the 2-acyl groups in 3-sn-phosphoglycerides. In Craspedocephalus puniceus (Flat-nosed pitviper), this protein is Acidic phospholipase A2 Tpu-E6a.